Reading from the N-terminus, the 303-residue chain is Heme A synthase (303 aa).

The Cytoplasmic segment spans residues 1–8 (MFGKKNLK). Residues 9–29 (WLGVVATLMMTFVQLGGALVT) traverse the membrane as a helical segment. The Extracellular portion of the chain corresponds to 30 to 67 (KTGSADGCGSSWPLCHGALIPEFFPIDTIIELSHRAVS). Cys-37 and Cys-44 are joined by a disulfide. The active site involves Glu-60. His-63 is a heme o binding site. The chain crosses the membrane as a helical span at residues 68–88 (ALSLLMVLWLVITAWKHIGYI). Over 89–93 (KEIKP) the chain is Cytoplasmic. The helical transmembrane segment at 94–114 (LSIISVGFLLLQALIGAAAVI) threads the bilayer. At 115–125 (WQQNDYVLALH) the chain is on the extracellular side. Residue His-125 participates in heme o binding. The helical transmembrane segment at 126–146 (FGISLISFSSVFLITLIIFSI) threads the bilayer. Topologically, residues 147–163 (DQKYEAAELYIKKPLRR) are cytoplasmic. A helical transmembrane segment spans residues 164 to 184 (LTWLMAIIIYCGVYTGALVRH). Residues 185–215 (ADASLAYGGWPLPFHDLVPHSEQDWVQLTHR) are Extracellular-facing. His-214 contributes to the heme b binding site. A helical membrane pass occupies residues 216 to 236 (IMAFIVFTIIMITYIHAVKNY). Over 237-244 (PNNRTVHY) the chain is Cytoplasmic. A helical membrane pass occupies residues 245–265 (GYTAAFILVILQVITGALSIM). Topologically, residues 266-270 (TNVNL) are extracellular. Residues 271 to 291 (IIALFHALFITYLFGMTTYFI) traverse the membrane as a helical segment. Position 276 (His-276) interacts with heme b. Over 292-303 (MLMLRSVRSDKQ) the chain is Cytoplasmic.

This sequence belongs to the COX15/CtaA family. Type 1 subfamily. In terms of assembly, interacts with CtaB. Heme b is required as a cofactor.

The protein localises to the cell membrane. The catalysed reaction is Fe(II)-heme o + 2 A + H2O = Fe(II)-heme a + 2 AH2. It functions in the pathway porphyrin-containing compound metabolism; heme A biosynthesis; heme A from heme O: step 1/1. Its function is as follows. Catalyzes the conversion of heme O to heme A by two successive hydroxylations of the methyl group at C8. The first hydroxylation forms heme I, the second hydroxylation results in an unstable dihydroxymethyl group, which spontaneously dehydrates, resulting in the formyl group of heme A. The sequence is that of Heme A synthase from Staphylococcus aureus (strain bovine RF122 / ET3-1).